We begin with the raw amino-acid sequence, 365 residues long: Chorismate synthase (365 aa).

Residues Arg48 and Arg54 each contribute to the NADP(+) site. FMN-binding positions include 131-133 (RSS), 243-244 (NA), Gly288, 303-307 (KPTSS), and Arg329.

It belongs to the chorismate synthase family. As to quaternary structure, homotetramer. The cofactor is FMNH2.

It catalyses the reaction 5-O-(1-carboxyvinyl)-3-phosphoshikimate = chorismate + phosphate. It participates in metabolic intermediate biosynthesis; chorismate biosynthesis; chorismate from D-erythrose 4-phosphate and phosphoenolpyruvate: step 7/7. Functionally, catalyzes the anti-1,4-elimination of the C-3 phosphate and the C-6 proR hydrogen from 5-enolpyruvylshikimate-3-phosphate (EPSP) to yield chorismate, which is the branch point compound that serves as the starting substrate for the three terminal pathways of aromatic amino acid biosynthesis. This reaction introduces a second double bond into the aromatic ring system. The sequence is that of Chorismate synthase from Rhizobium leguminosarum bv. trifolii (strain WSM2304).